The sequence spans 188 residues: dCTP deaminase (188 aa).

DCTP-binding positions include 111-116, 135-137, glutamine 156, tyrosine 170, and glutamine 180; these read KSTYAR and TLE. Glutamate 137 functions as the Proton donor/acceptor in the catalytic mechanism.

This sequence belongs to the dCTP deaminase family. As to quaternary structure, homotrimer.

The enzyme catalyses dCTP + H2O + H(+) = dUTP + NH4(+). Its pathway is pyrimidine metabolism; dUMP biosynthesis; dUMP from dCTP (dUTP route): step 1/2. Its function is as follows. Catalyzes the deamination of dCTP to dUTP. The protein is dCTP deaminase of Cupriavidus taiwanensis (strain DSM 17343 / BCRC 17206 / CCUG 44338 / CIP 107171 / LMG 19424 / R1) (Ralstonia taiwanensis (strain LMG 19424)).